A 338-amino-acid polypeptide reads, in one-letter code: Nucleoid-associated protein PM1885 (338 aa).

The protein belongs to the YejK family.

It localises to the cytoplasm. Its subcellular location is the nucleoid. In Pasteurella multocida (strain Pm70), this protein is Nucleoid-associated protein PM1885.